We begin with the raw amino-acid sequence, 560 residues long: SET domain-containing protein 4 (560 aa).

Disordered stretches follow at residues 1-61 (MTSP…PSPQ) and 125-157 (KKQNQDDNSKVSVTHNESSKENKITPSMRAEDN). The segment covering 26-38 (SRSSSYSSNSSMS) has biased composition (low complexity). A compositionally biased stretch (polar residues) spans 47 to 59 (LSVSSAASETLPS). Residues 141 to 157 (ESSKENKITPSMRAEDN) are compositionally biased toward basic and acidic residues. Residues 160–210 (KNGCICGSSDSKDELFIQCNKCKTWQHKLCYAFKKSDPIKRDFVCKRCDSD) form a PHD-type zinc finger. One can recognise an SET domain in the interval 346–475 (ADIEVRKSSN…KGEEISVEWQ (130 aa)).

It belongs to the SET3 family.

Functionally, putative chromatin regulator. In Saccharomyces cerevisiae (strain ATCC 204508 / S288c) (Baker's yeast), this protein is SET domain-containing protein 4 (SET4).